A 118-amino-acid chain; its full sequence is Basic phospholipase A2 nigexine (118 aa).

Disulfide bonds link Cys11–Cys70, Cys26–Cys117, Cys28–Cys44, Cys43–Cys98, Cys50–Cys91, Cys59–Cys84, and Cys77–Cys89. Ca(2+) contacts are provided by Tyr27, Gly29, and Gly31. Residue His47 is part of the active site. Asp48 provides a ligand contact to Ca(2+). The Coagulation factor Xa binding motif motif lies at 52 to 69 (EKAGKMGCWPYFTLYKYK). Residue Asp92 is part of the active site.

It belongs to the phospholipase A2 family. Group I subfamily. D49 sub-subfamily. Ca(2+) is required as a cofactor. In terms of tissue distribution, expressed by the venom gland.

The protein localises to the secreted. The catalysed reaction is a 1,2-diacyl-sn-glycero-3-phosphocholine + H2O = a 1-acyl-sn-glycero-3-phosphocholine + a fatty acid + H(+). Its function is as follows. Snake venom phospholipase A2 (PLA2) that shows anticoagulant activity, has cytotoxic activity and affects neuromuscular transmission in vitro. PLA2 catalyzes the calcium-dependent hydrolysis of the 2-acyl groups in 3-sn-phosphoglycerides. This is Basic phospholipase A2 nigexine from Naja pallida (Red spitting cobra).